The sequence spans 325 residues: 4-hydroxy-3-methylbut-2-enyl diphosphate reductase (325 aa).

Cys-25 serves as a coordination point for [4Fe-4S] cluster. 2 residues coordinate (2E)-4-hydroxy-3-methylbut-2-enyl diphosphate: His-54 and His-87. Dimethylallyl diphosphate contacts are provided by His-54 and His-87. 2 residues coordinate isopentenyl diphosphate: His-54 and His-87. Cys-109 lines the [4Fe-4S] cluster pocket. His-137 provides a ligand contact to (2E)-4-hydroxy-3-methylbut-2-enyl diphosphate. His-137 serves as a coordination point for dimethylallyl diphosphate. His-137 provides a ligand contact to isopentenyl diphosphate. Glu-139 serves as the catalytic Proton donor. Thr-179 is a binding site for (2E)-4-hydroxy-3-methylbut-2-enyl diphosphate. [4Fe-4S] cluster is bound at residue Cys-209. Residues Ser-237, Ser-238, Asn-239, and Ser-282 each coordinate (2E)-4-hydroxy-3-methylbut-2-enyl diphosphate. Ser-237, Ser-238, Asn-239, and Ser-282 together coordinate dimethylallyl diphosphate. Isopentenyl diphosphate contacts are provided by Ser-237, Ser-238, Asn-239, and Ser-282.

It belongs to the IspH family. [4Fe-4S] cluster is required as a cofactor.

It catalyses the reaction isopentenyl diphosphate + 2 oxidized [2Fe-2S]-[ferredoxin] + H2O = (2E)-4-hydroxy-3-methylbut-2-enyl diphosphate + 2 reduced [2Fe-2S]-[ferredoxin] + 2 H(+). The enzyme catalyses dimethylallyl diphosphate + 2 oxidized [2Fe-2S]-[ferredoxin] + H2O = (2E)-4-hydroxy-3-methylbut-2-enyl diphosphate + 2 reduced [2Fe-2S]-[ferredoxin] + 2 H(+). Its pathway is isoprenoid biosynthesis; dimethylallyl diphosphate biosynthesis; dimethylallyl diphosphate from (2E)-4-hydroxy-3-methylbutenyl diphosphate: step 1/1. It functions in the pathway isoprenoid biosynthesis; isopentenyl diphosphate biosynthesis via DXP pathway; isopentenyl diphosphate from 1-deoxy-D-xylulose 5-phosphate: step 6/6. In terms of biological role, catalyzes the conversion of 1-hydroxy-2-methyl-2-(E)-butenyl 4-diphosphate (HMBPP) into a mixture of isopentenyl diphosphate (IPP) and dimethylallyl diphosphate (DMAPP). Acts in the terminal step of the DOXP/MEP pathway for isoprenoid precursor biosynthesis. This Corynebacterium glutamicum (strain ATCC 13032 / DSM 20300 / JCM 1318 / BCRC 11384 / CCUG 27702 / LMG 3730 / NBRC 12168 / NCIMB 10025 / NRRL B-2784 / 534) protein is 4-hydroxy-3-methylbut-2-enyl diphosphate reductase.